Consider the following 827-residue polypeptide: Striatin homolog (827 aa).

The stretch at 37 to 109 (RAHWISEKAE…VEEEEEEDDK (73 aa)) forms a coiled coil. Disordered stretches follow at residues 99 to 123 (KVEEEEEEDDKIPKNREPPKKSKDN), 181 to 270 (KDIN…QLQS), 311 to 362 (SSVS…DEQS), and 400 to 459 (EEGN…SELM). Positions 109–123 (KIPKNREPPKKSKDN) are enriched in basic and acidic residues. Composition is skewed to low complexity over residues 184 to 270 (NNNN…QLQS) and 311 to 334 (SSVSSNSGNNSINSSSDSLDTSKQ). Polar residues predominate over residues 337-346 (EDPNNVTISK). Low complexity-rich tracts occupy residues 347–356 (QQQQEQQQQQ), 416–432 (TPTTKSSSSSSSSSTGS), and 439–453 (SSSSSSGSSSSNSNT). 6 WD repeats span residues 495 to 534 (SHFDGVRSIQFHPNEPIMISASEDNSIKVWNLNHLVPTKK), 548 to 593 (GHTG…IDSY), 610 to 649 (GHQDGIWDLLSIPNTPNLLSSSADGTVSLWNTTTSEQLYT), 709 to 748 (NNNSQINKIVSHPFMPLAMTGSEDHKIEFFDLNSNTVVHS), 751 to 790 (AHSNSISSLTIDPSGLYIASCAHDSSIRFWDISSKTCIQD), and 797 to 827 (KYDESIHCIKYHPNKGYFASGGADSVIRILN).

The protein belongs to the WD repeat striatin family. As to quaternary structure, part of the core of STRIPAK complexes.

It localises to the cytoplasm. The protein resides in the membrane. Its function is as follows. Calmodulin-binding scaffolding protein which is the center of the striatin-interacting phosphatase and kinase (STRIPAK) complexes. STRIPAK complexes have critical roles in protein (de)phosphorylation and are regulators of multiple signaling pathways including Hippo, MAPK, nuclear receptor and cytoskeleton remodeling. Different types of STRIPAK complexes are involved in a variety of biological processes such as cell growth, differentiation, apoptosis, metabolism and immune regulation. The chain is Striatin homolog (strn) from Dictyostelium discoideum (Social amoeba).